The sequence spans 489 residues: Membrane-bound lytic murein transglycosylase F (489 aa).

A signal peptide spans 1 to 32 (MFALTAYRLRCAAWLLATGIFLLLAGCSEAKA). The segment at 33-268 (PTALERVQKE…RLKDRYYGHV (236 aa)) is non-LT domain. The interval 269 to 489 (DVLGYVGAYT…PEEDSGDEKL (221 aa)) is LT domain. Residue Glu-315 is part of the active site. Residues 466 to 489 (AESGLHLPGVNKTRPEEDSGDEKL) form a disordered region. Residues 478-489 (TRPEEDSGDEKL) show a composition bias toward basic and acidic residues.

This sequence in the N-terminal section; belongs to the bacterial solute-binding protein 3 family. It in the C-terminal section; belongs to the transglycosylase Slt family.

It is found in the cell outer membrane. The catalysed reaction is Exolytic cleavage of the (1-&gt;4)-beta-glycosidic linkage between N-acetylmuramic acid (MurNAc) and N-acetylglucosamine (GlcNAc) residues in peptidoglycan, from either the reducing or the non-reducing ends of the peptidoglycan chains, with concomitant formation of a 1,6-anhydrobond in the MurNAc residue.. In terms of biological role, murein-degrading enzyme that degrades murein glycan strands and insoluble, high-molecular weight murein sacculi, with the concomitant formation of a 1,6-anhydromuramoyl product. Lytic transglycosylases (LTs) play an integral role in the metabolism of the peptidoglycan (PG) sacculus. Their lytic action creates space within the PG sacculus to allow for its expansion as well as for the insertion of various structures such as secretion systems and flagella. The chain is Membrane-bound lytic murein transglycosylase F from Pseudomonas aeruginosa (strain UCBPP-PA14).